Consider the following 1367-residue polypeptide: Mediator of RNA polymerase II transcription subunit 23 (1367 aa).

Residues Pro1343–Gln1367 are disordered. Positions Ala1346–Gln1367 are enriched in polar residues.

Belongs to the Mediator complex subunit 23 family. Component of the Mediator complex, which is composed of MED1, MED4, MED6, MED7, MED8, MED9, MED10, MED11, MED12, MED13, MED13L, MED14, MED15, MED16, MED17, MED18, MED19, MED20, MED21, MED22, MED23, MED24, MED25, MED26, MED27, MED29, MED30, MED31, CCNC, CDK8 and CDC2L6/CDK11. The MED12, MED13, CCNC and CDK8 subunits form a distinct module termed the CDK8 module. Mediator containing the CDK8 module is less active than Mediator lacking this module in supporting transcriptional activation. Individual preparations of the Mediator complex lacking one or more distinct subunits have been variously termed ARC, CRSP, DRIP, PC2, SMCC and TRAP. Interacts with CDK8, CEBPB, CTNNB1, ELK1 and GLI3. Interacts with the adenovirus E1A protein.

The protein resides in the nucleus. Functionally, component of the Mediator complex, a coactivator involved in the regulated transcription of nearly all RNA polymerase II-dependent genes. Mediator functions as a bridge to convey information from gene-specific regulatory proteins to the basal RNA polymerase II transcription machinery. Mediator is recruited to promoters by direct interactions with regulatory proteins and serves as a scaffold for the assembly of a functional pre-initiation complex with RNA polymerase II and the general transcription factors. Also required for transcriptional activation subsequent to the assembly of the pre-initiation complex. Required for transcriptional activation by adenovirus E1A protein. Required for ELK1-dependent transcriptional activation in response to activated Ras signaling. The protein is Mediator of RNA polymerase II transcription subunit 23 (Med23) of Rattus norvegicus (Rat).